The primary structure comprises 966 residues: Serine/threonine-protein kinase 10 (966 aa).

Phosphoserine is present on residues Ser-13 and Ser-20. The Protein kinase domain occupies Trp-36–Val-294. Residues Leu-42–Val-50 and Lys-65 each bind ATP. Asp-157 (proton acceptor) is an active-site residue. The segment at Asp-175–Gly-224 is activation segment. Thr-185 bears the Phosphothreonine; by autocatalysis mark. Ser-191 bears the Phosphoserine mark. 2 stretches are compositionally biased toward polar residues: residues Thr-341–Thr-363 and Gln-371–Pro-392. A disordered region spans residues Thr-341–Tyr-497. The segment covering Ile-421 to Pro-430 has biased composition (basic and acidic residues). Residues Ser-437, Ser-449, Ser-453, and Ser-484 each carry the phosphoserine modification. A compositionally biased stretch (polar residues) spans Pro-438–Leu-456. The segment covering Asp-485–Tyr-497 has biased composition (polar residues). 2 positions are modified to phosphoserine: Ser-513 and Ser-548. The stretch at Leu-588–Met-936 forms a coiled coil. Disordered stretches follow at residues Lys-660 to Arg-692, Ile-826 to Met-865, and Leu-901 to Ser-966. Basic and acidic residues-rich tracts occupy residues Glu-834–Met-865 and Leu-901–Pro-946. Thr-950 is modified (phosphothreonine). Residues Thr-950–Ser-966 are compositionally biased toward polar residues.

Belongs to the protein kinase superfamily. STE Ser/Thr protein kinase family. STE20 subfamily. Homodimer; homodimerization is required for activation segment autophosphorylation. Post-translationally, autophosphorylates following homodimerization, leading to activation of the protein. As to expression, expressed predominantly in lymphoid organs such as spleen, thymus, and bone marrow.

The protein resides in the cell membrane. It carries out the reaction L-seryl-[protein] + ATP = O-phospho-L-seryl-[protein] + ADP + H(+). It catalyses the reaction L-threonyl-[protein] + ATP = O-phospho-L-threonyl-[protein] + ADP + H(+). With respect to regulation, inhibited by the pyrrole-indolinone inhibitor SU11274 (K00593): intercalates between the ATP-binding Lys-65 and alpha-C glutamate (Glu-81), resulting in a partial disordering of the lysine side chain. Also specifically inhibited by erlotinib. Slightly inhibited by gefitinib. Its function is as follows. Serine/threonine-protein kinase involved in regulation of lymphocyte migration. Phosphorylates MSN, and possibly PLK1. Involved in regulation of lymphocyte migration by mediating phosphorylation of ERM proteins such as MSN. Acts as a negative regulator of MAP3K1/MEKK1. May also act as a cell cycle regulator by acting as a polo kinase kinase: mediates phosphorylation of PLK1 in vitro; however such data require additional evidences in vivo. In Mus musculus (Mouse), this protein is Serine/threonine-protein kinase 10 (Stk10).